The following is a 555-amino-acid chain: Transmembrane protein 87A (555 aa).

The signal sequence occupies residues 1–21; the sequence is MAVAAWLQVSPVIFLLLGAQP. Over 22–225 the chain is Lumenal; the sequence is FPLSFLGAGP…YEYLTLEDYP (204 aa). Cystine bridges form between Cys74–Cys128 and Cys89–Cys431. 3 N-linked (GlcNAc...) asparagine glycosylation sites follow: Asn79, Asn157, and Asn160. The helical transmembrane segment at 226–246 threads the bilayer; sequence LMIFFMVMCIVYVLFGVLWLA. At 247–257 the chain is on the cytoplasmic side; the sequence is WSACYWRDLLR. Residues 258–278 form a helical membrane-spanning segment; sequence IQFWIGAVIFLGMFEKAVFYA. Residues 279-305 are Lumenal-facing; that stretch reads EFQNIRYKGESVQNALVLAELLSAVKR. A helical transmembrane segment spans residues 306–322; the sequence is SLARTLVIIVSLGYGIV. The Cytoplasmic segment spans residues 323-325; the sequence is KPR. A helical transmembrane segment spans residues 326 to 346; it reads LGVTLHKVVVAGALYLLFSGM. The Lumenal portion of the chain corresponds to 347–361; it reads EGVLRVTGAQTDLAS. A helical membrane pass occupies residues 362 to 382; it reads LAFIPLAFLDTALCWWIFISL. Residues 383-403 are Cytoplasmic-facing; that stretch reads TQTMKLLKLRRNIVKLSLYRH. The helical transmembrane segment at 404-424 threads the bilayer; it reads FTNTLILAVAASIVFIIWTTM. The Lumenal segment spans residues 425–437; it reads KFRIVTCQSDWRE. A helical transmembrane segment spans residues 438 to 458; it reads LWVDDAIWRLLFSMILFVIMI. At 459-555 the chain is on the cytoplasmic side; the sequence is LWRPSANNQR…ITHFERSKME (97 aa). The tract at residues 491 to 515 is disordered; it reads SFEGMKMRSTKQEPNGTSKVNKAQE. Over residues 502 to 511 the composition is skewed to polar residues; it reads QEPNGTSKVN. A Phosphoserine modification is found at Ser540.

It belongs to the LU7TM family. TMEM87 subfamily. In terms of assembly, may interact with STOML3; STOML3 potentiates the mechanosensitive ion channel activity associated with TMEM87A. In terms of tissue distribution, highly expressed in sensory neurons responsive to mechanical force.

The protein localises to the cell membrane. Its subcellular location is the golgi apparatus membrane. It is found in the cell projection. It localises to the ruffle. Functionally, potential monoatomic ion channel gated by mechanical force, implicated in normal touch sensitivity through the generation of mechanically activated currents. However, a direct channel activity is debated and an alternative could be that it functions as a chaperone for an unidentified mechanosensitive ion channel. Could also be involved in cell mechanosensitivity regulating cell adhesion and migration. May also be involved in retrograde transport from endosomes to the trans-Golgi network (TGN). This chain is Transmembrane protein 87A, found in Mus musculus (Mouse).